We begin with the raw amino-acid sequence, 140 residues long: MAEHPRQLQDPAHQPRSHQVVKAATAATAGGSLLVPSGLILAGTVIALTLATPLFVIFSPVLVPAVITVSLIIMGFLASGGFGVAAVTVLSWIYRYVTGRHPPGADQLDHARMKLASKAREMKDRAEQFGQQHVTGSQGS.

2 helical membrane passes run 31 to 51 and 75 to 95; these read GSLL…LTLA and GFLA…WIYR.

The protein belongs to the oleosin family. Expressed in seeds.

Its subcellular location is the lipid droplet. It is found in the membrane. Its function is as follows. May have a structural role to stabilize the lipid body during desiccation of the seed by preventing coalescence of the oil. Probably interacts with both lipid and phospholipid moieties of lipid bodies. May also provide recognition signals for specific lipase anchorage in lipolysis during seedling growth. This chain is Oleosin Cor a 13, found in Corylus avellana (European hazel).